A 354-amino-acid chain; its full sequence is 3-dehydroquinate synthase (354 aa).

NAD(+)-binding positions include 100–104 (GATGD), 124–125 (TT), lysine 136, lysine 145, and 163–166 (FLKT). The Zn(2+) site is built by glutamate 178, histidine 242, and histidine 256.

It belongs to the sugar phosphate cyclases superfamily. Dehydroquinate synthase family. Co(2+) is required as a cofactor. It depends on Zn(2+) as a cofactor. Requires NAD(+) as cofactor.

It localises to the cytoplasm. The enzyme catalyses 7-phospho-2-dehydro-3-deoxy-D-arabino-heptonate = 3-dehydroquinate + phosphate. It functions in the pathway metabolic intermediate biosynthesis; chorismate biosynthesis; chorismate from D-erythrose 4-phosphate and phosphoenolpyruvate: step 2/7. In terms of biological role, catalyzes the conversion of 3-deoxy-D-arabino-heptulosonate 7-phosphate (DAHP) to dehydroquinate (DHQ). The chain is 3-dehydroquinate synthase from Staphylococcus aureus (strain NCTC 8325 / PS 47).